We begin with the raw amino-acid sequence, 201 residues long: Small ribosomal subunit protein uS4c (201 aa).

The disordered stretch occupies residues 17-44 (ALPGLTNKKPRTGSDLRNQSRSGKKSQY). Positions 89 to 149 (MRLDNILFRL…DEQKSRALIQ (61 aa)) constitute an S4 RNA-binding domain.

This sequence belongs to the universal ribosomal protein uS4 family. As to quaternary structure, part of the 30S ribosomal subunit. Contacts protein S5. The interaction surface between S4 and S5 is involved in control of translational fidelity.

The protein localises to the plastid. It localises to the chloroplast. One of the primary rRNA binding proteins, it binds directly to 16S rRNA where it nucleates assembly of the body of the 30S subunit. Its function is as follows. With S5 and S12 plays an important role in translational accuracy. The chain is Small ribosomal subunit protein uS4c (rps4) from Solanum bulbocastanum (Wild potato).